Consider the following 622-residue polypeptide: E3 ubiquitin-protein ligase hrd-1 (622 aa).

The N-terminal stretch at 1–23 (MRVSAGLMIGGSCVATAATVLNA) is a signal peptide. Over 24–41 (FVINKQFYPSIVYLSKSN) the chain is Lumenal. The chain crosses the membrane as a helical span at residues 42-62 (ASMAVLYFQGIVLVYLMFQLL). The Cytoplasmic portion of the chain corresponds to 63–99 (KSILFGDLRAAEAEHLSERTWHAVLETCLAFTVFRDD). Residues 100 to 120 (FSAMFVMQFIGLLFIKCFHWL) traverse the membrane as a helical segment. Topologically, residues 121-141 (ADDRVDMMERSPVITLRFHLR) are lumenal. Residues 142–162 (MMTVLAALGFADSYFVSSAYF) traverse the membrane as a helical segment. The Cytoplasmic portion of the chain corresponds to 163–170 (STITKGAS). The chain crosses the membrane as a helical span at residues 171-191 (SQIVFGFEYAILLALVLHVTI). Residues 192-215 (KYLLHMHDLRNPQSWDNKAVYLLY) lie on the Lumenal side of the membrane. The helical transmembrane segment at 216–236 (AELLINLIRCVLYGFFAVIML) threads the bilayer. The Cytoplasmic segment spans residues 237–622 (RVHTFPLFSV…RFPPPNPEHE (386 aa)). The RING-type; atypical zinc-finger motif lies at 292 to 333 (CIICREEMTVESSPKRLPCSHVFHAHCLRSWFQRQQTCPTCR). The segment covering 436–445 (MPPPPIPQPN) has biased composition (pro residues). Disordered stretches follow at residues 436–463 (MPPP…PNFD) and 514–622 (PVPT…PEHE). Over residues 526-538 (ATASSVPTSVPSE) the composition is skewed to low complexity. Residues 562–577 (FNDTQSTSTPSTSAGP) show a composition bias toward polar residues. The segment covering 579-596 (PSLTPSTSSVPSTSSVRT) has biased composition (low complexity).

The protein belongs to the HRD1 family. Homodimer.

It localises to the endoplasmic reticulum membrane. It carries out the reaction S-ubiquitinyl-[E2 ubiquitin-conjugating enzyme]-L-cysteine + [acceptor protein]-L-lysine = [E2 ubiquitin-conjugating enzyme]-L-cysteine + N(6)-ubiquitinyl-[acceptor protein]-L-lysine.. It functions in the pathway protein modification; protein ubiquitination. Acts as an E3 ubiquitin-protein ligase which accepts ubiquitin specifically from endoplasmic reticulum-associated ubc-7 E2 ligase and transfers it to substrates, promoting their degradation. Component of the endoplasmic reticulum quality control (ERQC) system, which is also called the ER-associated degradation (ERAD) system, involved in ubiquitin-dependent degradation of misfolded endoplasmic reticulum proteins. Also promotes the degradation of normal but naturally short-lived proteins. Protects cells from ER stress-induced apoptosis. Thought to play a role together with hsp-3 in developmental growth and function of intestinal cells and to play a role together with hsp-4 in gonad formation. This Caenorhabditis briggsae protein is E3 ubiquitin-protein ligase hrd-1.